We begin with the raw amino-acid sequence, 256 residues long: MTDLKKAAQRAIELMDLTTLNDDDTDQKVIDLCHKAKTAAGNTAAICIYPRFIPIARKTLDEIGAEDIQIATVTNFPHGNDDIAIAVLETRAAVAYGADEVDVVFPYRALMEGNETIGFELVKACKEACGEVLLKVIIESGVLADPALIRRASELSIDAGADFIKTSTGKVPVNATLEAAEIMLTVISEKNTQVGFKPAGGVRDAAQAAEFLGVAERILGADWVSPRTFRFGASSLLNSLLHTLELADAPKPTQGY.

Aspartate 102 serves as the catalytic Proton donor/acceptor. Lysine 165 (schiff-base intermediate with acetaldehyde) is an active-site residue. The active-site Proton donor/acceptor is lysine 197.

Belongs to the DeoC/FbaB aldolase family. DeoC type 2 subfamily.

The protein resides in the cytoplasm. The catalysed reaction is 2-deoxy-D-ribose 5-phosphate = D-glyceraldehyde 3-phosphate + acetaldehyde. The protein operates within carbohydrate degradation; 2-deoxy-D-ribose 1-phosphate degradation; D-glyceraldehyde 3-phosphate and acetaldehyde from 2-deoxy-alpha-D-ribose 1-phosphate: step 2/2. Its function is as follows. Catalyzes a reversible aldol reaction between acetaldehyde and D-glyceraldehyde 3-phosphate to generate 2-deoxy-D-ribose 5-phosphate. The polypeptide is Deoxyribose-phosphate aldolase (Shewanella baltica (strain OS223)).